A 118-amino-acid polypeptide reads, in one-letter code: MTALAQAQCEACRADAPKVSDEELAELIREIPDWNIEVRGDHMELERVFLFRNFRHALAFTNAVGAIAEEVGHHPALLTEWGKVTVTWWSHEMRGLHRNDFIMAARTDQLAASAEGRK.

Belongs to the pterin-4-alpha-carbinolamine dehydratase family.

The enzyme catalyses (4aS,6R)-4a-hydroxy-L-erythro-5,6,7,8-tetrahydrobiopterin = (6R)-L-erythro-6,7-dihydrobiopterin + H2O. This Stutzerimonas stutzeri (strain A1501) (Pseudomonas stutzeri) protein is Putative pterin-4-alpha-carbinolamine dehydratase.